The chain runs to 136 residues: Large ribosomal subunit protein uL16c (136 aa).

The protein belongs to the universal ribosomal protein uL16 family. In terms of assembly, part of the 50S ribosomal subunit.

Its subcellular location is the plastid. The protein localises to the chloroplast. In Citrus sinensis (Sweet orange), this protein is Large ribosomal subunit protein uL16c.